A 653-amino-acid chain; its full sequence is MLQILNNANDKIQYKLNDFSDLTPSFKIKSGFFTIHRINYEKLEENEEEKPRQISAFDIETNGREIFFGVYDGSEYKYVIIRKPEDVKNALDLLTEETYFYGDYDLPVSLANYVLLGKHSKFAKKITGENYFTTKNLRIKRYKNFYKILYNGRSINSINLLQFYSESLYEAYSRYYTKLQEMGFQVFDEQTMKEWKEDKEKRANFDKLDFNDPKTIQEIARYNKLDVIATYQLALLKNSLFGIKVKSTLPRTAITYIISQVQSEFVKGLRSYTEIELTLKRLYKGGLFDSNELGKFKKVYKYDVNSMYPFMMSWLPELELVETQKGFEVNEEPLLKGTQFNEDAKYVYIYKITLKQDRKYVASKANGMLLRMMYNRGSFFDFELADEKHELIPDIKIVGQYYTMKFKITKHRIFKDVIYNLYNKRLQLKKEKNPLEKVYKLILNSSYGKFGERIGFNAKFQNVIYASMITALGRTFIQNVDPNAISYLTDSVISKAPIKSELVGDQLGQLKQEGVGEAIVIGNGQYILNDPQEKMIKLRGFNVDESIAEKIIEYVGNYLAKGKIVRVQIPTKIMIRNLQQYKILAEKDSNVLMGMLSNQIKIFTPLNTKQRYTYNVHWFGSMFRDEQEHKEYRKTWEKYIETIEPIDLNSILS.

The protein belongs to the DNA polymerase type-B family.

It carries out the reaction DNA(n) + a 2'-deoxyribonucleoside 5'-triphosphate = DNA(n+1) + diphosphate. Functionally, replicates viral genomic DNA. This Acidianus convivator (ABV) protein is DNA polymerase.